We begin with the raw amino-acid sequence, 250 residues long: ATP synthase subunit a (250 aa).

A run of 5 helical transmembrane segments spans residues 27–47 (TDTV…AFYL), 83–103 (IAPF…ISNW), 129–149 (INYV…AGIW), 191–211 (IFAG…IMWA), and 219–239 (FDLF…ILYF).

Belongs to the ATPase A chain family. F-type ATPases have 2 components, CF(1) - the catalytic core - and CF(0) - the membrane proton channel. CF(1) has five subunits: alpha(3), beta(3), gamma(1), delta(1), epsilon(1). CF(0) has three main subunits: a(1), b(2) and c(9-12). The alpha and beta chains form an alternating ring which encloses part of the gamma chain. CF(1) is attached to CF(0) by a central stalk formed by the gamma and epsilon chains, while a peripheral stalk is formed by the delta and b chains.

The protein resides in the cell membrane. Functionally, key component of the proton channel; it plays a direct role in the translocation of protons across the membrane. This chain is ATP synthase subunit a, found in Mycobacterium marinum (strain ATCC BAA-535 / M).